Consider the following 254-residue polypeptide: Probable transcriptional regulatory protein Cyan7425_4347 (254 aa).

It belongs to the TACO1 family.

It is found in the cytoplasm. The chain is Probable transcriptional regulatory protein Cyan7425_4347 from Cyanothece sp. (strain PCC 7425 / ATCC 29141).